Here is a 444-residue protein sequence, read N- to C-terminus: Glutamyl-tRNA(Gln) amidotransferase subunit D (444 aa).

Residues Ser-92–Asn-424 enclose the Asparaginase/glutaminase domain. Active-site residues include Thr-102, Thr-178, Asp-179, and Lys-257.

The protein belongs to the asparaginase 1 family. GatD subfamily. Heterodimer of GatD and GatE.

The enzyme catalyses L-glutamyl-tRNA(Gln) + L-glutamine + ATP + H2O = L-glutaminyl-tRNA(Gln) + L-glutamate + ADP + phosphate + H(+). Functionally, allows the formation of correctly charged Gln-tRNA(Gln) through the transamidation of misacylated Glu-tRNA(Gln) in organisms which lack glutaminyl-tRNA synthetase. The reaction takes place in the presence of glutamine and ATP through an activated gamma-phospho-Glu-tRNA(Gln). The GatDE system is specific for glutamate and does not act on aspartate. The polypeptide is Glutamyl-tRNA(Gln) amidotransferase subunit D (Saccharolobus solfataricus (strain ATCC 35092 / DSM 1617 / JCM 11322 / P2) (Sulfolobus solfataricus)).